The sequence spans 110 residues: Protein RnfH (110 aa).

The disordered stretch occupies residues 90-110 (VDKTRREGSIEGRKWLPKDSR).

It belongs to the UPF0125 (RnfH) family.

The chain is Protein RnfH from Burkholderia mallei (strain NCTC 10229).